We begin with the raw amino-acid sequence, 523 residues long: Pentatricopeptide repeat-containing protein At1g64580 (523 aa).

13 PPR repeats span residues His-43–Pro-77, Ser-78–His-112, Asp-113–Pro-147, Ser-148–Pro-182, Asn-183–Ala-217, Asp-218–Pro-252, Asn-253–Pro-287, Asn-288–Pro-322, Asp-323–Gly-357, Asp-358–Pro-392, Asp-393–Val-427, Asp-428–Pro-462, and Asp-463–Pro-497.

This sequence belongs to the PPR family. P subfamily.

The protein is Pentatricopeptide repeat-containing protein At1g64580 of Arabidopsis thaliana (Mouse-ear cress).